Reading from the N-terminus, the 356-residue chain is Heparan sulfate 2-O-sulfotransferase 1 (356 aa).

Topologically, residues 1-11 are cytoplasmic; the sequence is MGLLRIMLPPK. The chain crosses the membrane as a helical; Signal-anchor for type II membrane protein span at residues 12 to 28; it reads LQLLAVLVFGVAVLFLE. A coiled-coil region spans residues 24–51; sequence VLFLENQIQKLEESRGKLERAIARHEVR. Over 29 to 356 the chain is Lumenal; that stretch reads NQIQKLEESR…FYEKIYPKSN (328 aa). Residues lysine 83, threonine 84, alanine 85, serine 86, threonine 87, and serine 88 each contribute to the adenosine 3',5'-bisphosphate site. 2 N-linked (GlcNAc...) asparagine glycosylation sites follow: asparagine 108 and asparagine 127. Active-site residues include histidine 140 and histidine 142. Adenosine 3',5'-bisphosphate is bound by residues arginine 164 and serine 172. 2 cysteine pairs are disulfide-bonded: cysteine 201–cysteine 209 and cysteine 222–cysteine 228. Positions 279, 285, 290, and 293 each coordinate adenosine 3',5'-bisphosphate.

Belongs to the sulfotransferase 3 family. As to quaternary structure, homotrimer. In terms of tissue distribution, expressed in heart, limb, head and trunk. At stages 20 and 24, it is expressed in the most regions of the first and second pharyngeal arche. In both wing and leg buds, it is detected at the overlying ectoderm and mesenchyme throughout stages 21, 23 and 24.

The protein localises to the golgi apparatus membrane. Functionally, catalyzes the transfer of a sulfo group from 3'-phospho-5'-adenylyl sulfate (PAPS) to the 2-OH position of iduronic acid (IdoA) or glucuronic acid (GlcA) within the heparan sulfate (HS) chain and participates in HS biosynthesis. In Gallus gallus (Chicken), this protein is Heparan sulfate 2-O-sulfotransferase 1.